Here is a 293-residue protein sequence, read N- to C-terminus: 33 kDa chaperonin (293 aa).

2 disulfide bridges follow: Cys-237/Cys-239 and Cys-271/Cys-274.

The protein belongs to the HSP33 family. Under oxidizing conditions two disulfide bonds are formed involving the reactive cysteines. Under reducing conditions zinc is bound to the reactive cysteines and the protein is inactive.

It is found in the cytoplasm. Its function is as follows. Redox regulated molecular chaperone. Protects both thermally unfolding and oxidatively damaged proteins from irreversible aggregation. Plays an important role in the bacterial defense system toward oxidative stress. In Haemophilus influenzae (strain PittEE), this protein is 33 kDa chaperonin.